Consider the following 431-residue polypeptide: Probable oxidoreductase OrdL (431 aa).

The polypeptide is Probable oxidoreductase OrdL (ordL) (Haemophilus influenzae (strain ATCC 51907 / DSM 11121 / KW20 / Rd)).